A 182-amino-acid chain; its full sequence is Nucleoside-triphosphatase THEP1 (182 aa).

ATP contacts are provided by residues 10 to 17 (GRPGIGKT) and 102 to 109 (VVVIDEIG).

Belongs to the THEP1 NTPase family.

The enzyme catalyses a ribonucleoside 5'-triphosphate + H2O = a ribonucleoside 5'-diphosphate + phosphate + H(+). In terms of biological role, has nucleotide phosphatase activity towards ATP, GTP, CTP, TTP and UTP. May hydrolyze nucleoside diphosphates with lower efficiency. This chain is Nucleoside-triphosphatase THEP1, found in Thermofilum pendens (strain DSM 2475 / Hrk 5).